Here is a 439-residue protein sequence, read N- to C-terminus: Coiled-coil domain-containing protein 166 (439 aa).

The interval 1–28 (MAPKKKRGPSAGSQPGGAAAAGAEQPLS) is disordered. A compositionally biased stretch (low complexity) spans 9–23 (PSAGSQPGGAAAAGA). Coiled-coil stretches lie at residues 27–74 (LSER…EENR) and 121–213 (DGVR…VRAL). The interval 276-439 (PGGPPLWERP…AAAEASPGRA (164 aa)) is disordered. The span at 338–365 (VLSSMDSRVPSLATSKVGSRMPSLTASR) shows a compositional bias: polar residues. Composition is skewed to low complexity over residues 376–392 (SLEG…RVSS) and 428–439 (AEAAAEASPGRA).

The polypeptide is Coiled-coil domain-containing protein 166 (CCDC166) (Homo sapiens (Human)).